Consider the following 577-residue polypeptide: Cytochrome P450 714D1 (577 aa).

Over 1 to 3 (MES) the chain is Lumenal. Residues 4-24 (FFVFFTAAALPVVVAAAVIAG) traverse the membrane as a helical; Signal-anchor for type III membrane protein segment. The Cytoplasmic segment spans residues 25–577 (LCITAAWLAR…STAPVHSSHN (553 aa)). Positions 315–343 (REHGGKAAPPSPPERDFLGSIIENSGGQP) are disordered. Cys-504 is a heme binding site.

The protein belongs to the cytochrome P450 family. Requires heme as cofactor. As to expression, expressed in rapidly elongating or dividing tissues, including the shoot apical meristem, the intercalary meristem and elongating zones of internodes, and panicle but not in young seedlings, roots and leaves. During the heading stage, the highest expression is detected in the flowering spikelets, anthers, the divisional zone and the node of the uppermost internode.

The protein localises to the endoplasmic reticulum membrane. Catalyzes the 16alpha,17-epoxidation on non-13-hydroxylated gibberellins (GAs), including GA4, GA9, and GA12. No activity with GA1, GA20, GA53 or ent-kaurenoic acid. Reduces the biological activity of GAs. The polypeptide is Cytochrome P450 714D1 (CYP714D1) (Oryza sativa subsp. japonica (Rice)).